The primary structure comprises 417 residues: Snake venom metalloproteinase aculysin-1 (417 aa).

The N-terminal stretch at 1 to 20 (MIQVLLVTICLAAFPYQGSS) is a signal peptide. The propeptide occupies 21-189 (IMLESGKVND…KKPSWLNLTP (169 aa)). One can recognise a Peptidase M12B domain in the interval 197 to 392 (TSVNLQLIVD…KKPKCIHKKS (196 aa)). 3 cysteine pairs are disulfide-bonded: Cys308–Cys387, Cys349–Cys371, and Cys351–Cys354. His333 serves as a coordination point for Zn(2+). The active site involves Glu334. Zn(2+) contacts are provided by His337 and His343. A propeptide spanning residues 393–417 (LKTDTVSTSVSGNEPLDDNVDGFHA) is cleaved from the precursor. The tract at residues 398–417 (VSTSVSGNEPLDDNVDGFHA) is disordered. The segment covering 407-417 (PLDDNVDGFHA) has biased composition (acidic residues).

The protein belongs to the venom metalloproteinase (M12B) family. P-I subfamily. Monomer. It depends on Zn(2+) as a cofactor. As to expression, expressed by the venom gland.

It is found in the secreted. This protein is an alkaline zinc metalloprotease from snake venom that possesses weak hemorrhagic activity. This chain is Snake venom metalloproteinase aculysin-1, found in Deinagkistrodon acutus (Hundred-pace snake).